The sequence spans 212 residues: GrpE protein homolog, mitochondrial (212 aa).

It belongs to the GrpE family. In terms of assembly, component of the PAM complex, at least composed of mtHsp70, MGE1, TIM44, PAM16, PAM17 and PAM18.

It is found in the mitochondrion matrix. Functionally, essential component of the PAM complex, a complex required for the translocation of transit peptide-containing proteins from the inner membrane into the mitochondrial matrix in an ATP-dependent manner. Seems to control the nucleotide-dependent binding of SSC1 to substrate proteins. This Eremothecium gossypii (strain ATCC 10895 / CBS 109.51 / FGSC 9923 / NRRL Y-1056) (Yeast) protein is GrpE protein homolog, mitochondrial (mge1).